A 329-amino-acid chain; its full sequence is Biotin synthase (329 aa).

In terms of domain architecture, Radical SAM core spans 38–262 (NTIQVSTLLS…IMPHSYIRLS (225 aa)). The [4Fe-4S] cluster site is built by Cys-53, Cys-57, and Cys-60. 4 residues coordinate [2Fe-2S] cluster: Cys-97, Cys-128, Cys-188, and Arg-260.

This sequence belongs to the radical SAM superfamily. Biotin synthase family. In terms of assembly, homodimer. Requires [4Fe-4S] cluster as cofactor. The cofactor is [2Fe-2S] cluster.

It catalyses the reaction (4R,5S)-dethiobiotin + (sulfur carrier)-SH + 2 reduced [2Fe-2S]-[ferredoxin] + 2 S-adenosyl-L-methionine = (sulfur carrier)-H + biotin + 2 5'-deoxyadenosine + 2 L-methionine + 2 oxidized [2Fe-2S]-[ferredoxin]. Its pathway is cofactor biosynthesis; biotin biosynthesis; biotin from 7,8-diaminononanoate: step 2/2. Functionally, catalyzes the conversion of dethiobiotin (DTB) to biotin by the insertion of a sulfur atom into dethiobiotin via a radical-based mechanism. The chain is Biotin synthase from Acinetobacter baumannii (strain ACICU).